Here is a 64-residue protein sequence, read N- to C-terminus: Defensin-like protein 41 (64 aa).

The disordered stretch occupies residues 1 to 21 (MTQGKRKHPCDLKNPSKRAPP). Cystine bridges form between cysteine 10–cysteine 61, cysteine 24–cysteine 47, cysteine 33–cysteine 56, and cysteine 37–cysteine 58.

It belongs to the DEFL family.

The chain is Defensin-like protein 41 from Arabidopsis thaliana (Mouse-ear cress).